The primary structure comprises 258 residues: Indole-3-glycerol phosphate synthase (258 aa).

It belongs to the TrpC family.

The catalysed reaction is 1-(2-carboxyphenylamino)-1-deoxy-D-ribulose 5-phosphate + H(+) = (1S,2R)-1-C-(indol-3-yl)glycerol 3-phosphate + CO2 + H2O. It functions in the pathway amino-acid biosynthesis; L-tryptophan biosynthesis; L-tryptophan from chorismate: step 4/5. The chain is Indole-3-glycerol phosphate synthase from Exiguobacterium sibiricum (strain DSM 17290 / CCUG 55495 / CIP 109462 / JCM 13490 / 255-15).